The chain runs to 348 residues: Tetraacyldisaccharide 4'-kinase (348 aa).

50–57 (TMGGTGKT) provides a ligand contact to ATP.

Belongs to the LpxK family.

It catalyses the reaction a lipid A disaccharide + ATP = a lipid IVA + ADP + H(+). It participates in glycolipid biosynthesis; lipid IV(A) biosynthesis; lipid IV(A) from (3R)-3-hydroxytetradecanoyl-[acyl-carrier-protein] and UDP-N-acetyl-alpha-D-glucosamine: step 6/6. In terms of biological role, transfers the gamma-phosphate of ATP to the 4'-position of a tetraacyldisaccharide 1-phosphate intermediate (termed DS-1-P) to form tetraacyldisaccharide 1,4'-bis-phosphate (lipid IVA). In Desulfotalea psychrophila (strain LSv54 / DSM 12343), this protein is Tetraacyldisaccharide 4'-kinase.